Consider the following 279-residue polypeptide: Odontogenic ameloblast-associated protein (279 aa).

The signal sequence occupies residues 1-15; it reads MKIIILLGFLGATLS. Residues 100-123 are compositionally biased toward low complexity; that stretch reads AQGAQAGQVDPSQAQTPPQTQPGP. The interval 100-125 is disordered; the sequence is AQGAQAGQVDPSQAQTPPQTQPGPNH. O-linked (GalNAc...) threonine glycosylation is found at threonine 115 and threonine 119. Positions 127–129 are interaction with ARHGEF5; that stretch reads MPY. O-linked (GalNAc...) threonine glycans are attached at residues threonine 168, threonine 244, threonine 250, threonine 251, threonine 255, and threonine 273.

This sequence belongs to the ODAM family. In terms of assembly, interacts (via C-terminus) with ARHGEF5. O-glycosylated.

The protein resides in the secreted. It is found in the cytoplasm. Its subcellular location is the nucleus. Its function is as follows. Tooth-associated epithelia protein that probably plays a role in odontogenesis, the complex process that results in the initiation and generation of the tooth. May be incorporated in the enamel matrix at the end of mineralization process. Involved in the induction of RHOA activity via interaction with ARHGEF and expression of downstream factors such as ROCK. Plays a role in attachment of the junctional epithelium to the tooth surface. The protein is Odontogenic ameloblast-associated protein (ODAM) of Macaca mulatta (Rhesus macaque).